Consider the following 209-residue polypeptide: High mobility group protein B2 (209 aa).

Lys-3 carries the post-translational modification N6-acetyllysine. The HMG box 1 DNA-binding region spans 9–79 (PRGKMSSYAF…RYDREMKNYV (71 aa)). Cys-23 bears the Cysteine sulfonic acid (-SO3H); alternate mark. A disulfide bridge connects residues Cys-23 and Cys-45. Position 30 is an N6-acetyllysine (Lys-30). At Ser-35 the chain carries Phosphoserine. Residue Lys-43 is modified to N6-acetyllysine. A Cysteine sulfonic acid (-SO3H); alternate modification is found at Cys-45. The segment covering 52-76 (MSAKEKSKFEDMAKSDKARYDREMK) has biased composition (basic and acidic residues). 2 disordered regions span residues 52–150 (MSAK…KAAK) and 162–209 (YRAK…EDEE). The residue at position 90 (Lys-90) is an N6-acetyllysine. Residues 95–163 (PKRPPSAFFL…KYEKDIAAYR (69 aa)) constitute a DNA-binding region (HMG box 2). Ser-100 carries the post-translational modification Phosphoserine. Residue Cys-106 is modified to Cysteine sulfonic acid (-SO3H). 3 stretches are compositionally biased toward basic and acidic residues: residues 107 to 117 (SEHRPKIKSEH), 137 to 150 (SAKD…KAAK), and 162 to 172 (YRAKGKSEAGK). N6-acetyllysine is present on residues Lys-114 and Lys-141. Residues 165-180 (KGKSEAGKKGPGRPTG) are required for chemotactic activity. Residues 187 to 209 (PEDEEEEEEEEDEDEEEEDEDEE) are compositionally biased toward acidic residues.

This sequence belongs to the HMGB family. Interacts with POU2F2, POU2F1 and POU3F1. Component of the RAG complex composed of core components RAG1 and RAG2, and associated component HMGB1 or HMGB2. Component of the SET complex, composed of at least ANP32A, APEX1, HMGB2, NME1, SET and TREX1. Directly interacts with SET. Interacts with LEF1. Post-translationally, reduction/oxidation of cysteine residues Cys-23, Cys-45 and Cys-106 and a possible intramolecular disulfide bond involving Cys-23 and Cys-45 give rise to different redox forms with specific functional activities in various cellular compartments: 1- fully reduced HMGB2 (HMGB2C23hC45hC106h), 2- disulfide HMGB2 (HMGB2C23-C45C106h) and 3- sulfonyl HMGB2 (HMGB2C23soC45soC106so).

The protein resides in the nucleus. The protein localises to the chromosome. Its subcellular location is the cytoplasm. It localises to the secreted. Functionally, multifunctional protein with various roles in different cellular compartments. May act in a redox sensitive manner. In the nucleus is an abundant chromatin-associated non-histone protein involved in transcription, chromatin remodeling and V(D)J recombination and probably other processes. Binds DNA with a preference to non-canonical DNA structures such as single-stranded DNA. Can bent DNA and enhance DNA flexibility by looping thus providing a mechanism to promote activities on various gene promoters by enhancing transcription factor binding and/or bringing distant regulatory sequences into close proximity. Involved in V(D)J recombination by acting as a cofactor of the RAG complex: acts by stimulating cleavage and RAG protein binding at the 23 bp spacer of conserved recombination signal sequences (RSS). Proposed to be involved in the innate immune response to nucleic acids by acting as a cytoplasmic promiscuous immunogenic DNA/RNA sensor which cooperates with subsequent discriminative sensing by specific pattern recognition receptors. In the extracellular compartment acts as a chemokine. Promotes proliferation and migration of endothelial cells implicating AGER/RAGE. Has antimicrobial activity in gastrointestinal epithelial tissues. Involved in inflammatory response to antigenic stimulus coupled with pro-inflammatory activity. May play a role in germ cell differentiation. Involved in modulation of neurogenesis probably by regulation of neural stem proliferation. Involved in articular cartilage surface maintenance implicating LEF1 and the Wnt/beta-catenin pathway. The sequence is that of High mobility group protein B2 (HMGB2) from Bos taurus (Bovine).